Reading from the N-terminus, the 183-residue chain is MDHLTKEQIAEFREAFNLFDKDGDGTITSKELGTVMGSLGQSPTEAELKKMVEEVDADGSGSIEFEEFLGLLARKLRDTGAEDDIRDAFRVFDKDQNGFITPDELRHVMANLSDPLSDDELADMLHEADSDGDGQINYNEFLKVMMAKRRQNMMEGHGSGGHRSSNSHKKSGCCGPNSSCTIL.

4 EF-hand domains span residues 7–42 (EQIA…LGQS), 43–78 (PTEA…KLRD), 80–115 (GAED…LSDP), and 116–151 (LSDD…KRRQ). The Ca(2+) site is built by Asp20, Asp22, Asp24, Thr26, Glu31, Asp56, Asp58, Ser60, Ser62, Glu67, Asp93, Asp95, Asn97, Glu104, Asp129, Asp131, Asp133, Gln135, and Glu140. The interval 154-183 (MEGHGSGGHRSSNSHKKSGCCGPNSSCTIL) is disordered. 2 S-palmitoyl cysteine lipidation sites follow: Cys173 and Cys174. At Cys180 the chain carries Cysteine methyl ester. Cys180 carries the S-farnesyl cysteine lipid modification. Positions 181 to 183 (TIL) are cleaved as a propeptide — removed in mature form.

It belongs to the calmodulin family.

The protein localises to the membrane. In terms of biological role, potential calcium sensor. This chain is Calmodulin-like protein 3 (CML3), found in Oryza sativa subsp. japonica (Rice).